The chain runs to 598 residues: Glutamine--fructose-6-phosphate aminotransferase [isomerizing] (598 aa).

The active-site Nucleophile; for GATase activity is C2. Positions 2–218 constitute a Glutamine amidotransferase type-2 domain; sequence CGIVGYIGNN…DLSLGYASKD (217 aa). SIS domains lie at 277 to 421 and 450 to 588; these read VFDE…KRNL and LSKR…VDMP. Catalysis depends on K593, which acts as the For Fru-6P isomerization activity.

Homodimer.

It is found in the cytoplasm. The catalysed reaction is D-fructose 6-phosphate + L-glutamine = D-glucosamine 6-phosphate + L-glutamate. In terms of biological role, catalyzes the first step in hexosamine metabolism, converting fructose-6P into glucosamine-6P using glutamine as a nitrogen source. The polypeptide is Glutamine--fructose-6-phosphate aminotransferase [isomerizing] (Campylobacter jejuni subsp. jejuni serotype O:2 (strain ATCC 700819 / NCTC 11168)).